A 386-amino-acid chain; its full sequence is Ferredoxin--NADP reductase (386 aa).

Residues 9–67 (SRMFRYEVVGLRQTAETEKTNYAIRNSGSQFFNVPYDRMNQFMQQITRWGGKIVSIQPL) enclose the CpcD-like domain. Residues 104 to 228 (NNPCIGKVIS…TGPVGKEMLL (125 aa)) form the FAD-binding FR-type domain. FAD contacts are provided by residues 163–166 (RLYS), 184–186 (CVR), tyrosine 190, 202–204 (VCS), and threonine 243. NADP(+)-binding residues include serine 166 and arginine 186. Residues threonine 243, 275-276 (VA), 305-306 (SR), 315-319 (KMYIQ), 344-345 (GL), and glutamate 384 contribute to the NADP(+) site.

This sequence belongs to the ferredoxin--NADP reductase type 1 family. FAD is required as a cofactor.

It localises to the cellular thylakoid membrane. It catalyses the reaction 2 reduced [2Fe-2S]-[ferredoxin] + NADP(+) + H(+) = 2 oxidized [2Fe-2S]-[ferredoxin] + NADPH. This is Ferredoxin--NADP reductase (petH) from Thermosynechococcus vestitus (strain NIES-2133 / IAM M-273 / BP-1).